The following is a 165-amino-acid chain: NADPH-dependent 7-cyano-7-deazaguanine reductase (165 aa).

Cys56 (thioimide intermediate) is an active-site residue. The Proton donor role is filled by Asp63. Residues 78–80 (VES) and 97–98 (HE) each bind substrate.

The protein belongs to the GTP cyclohydrolase I family. QueF type 1 subfamily.

The protein resides in the cytoplasm. It catalyses the reaction 7-aminomethyl-7-carbaguanine + 2 NADP(+) = 7-cyano-7-deazaguanine + 2 NADPH + 3 H(+). It functions in the pathway tRNA modification; tRNA-queuosine biosynthesis. Its function is as follows. Catalyzes the NADPH-dependent reduction of 7-cyano-7-deazaguanine (preQ0) to 7-aminomethyl-7-deazaguanine (preQ1). This chain is NADPH-dependent 7-cyano-7-deazaguanine reductase, found in Bacillus cytotoxicus (strain DSM 22905 / CIP 110041 / 391-98 / NVH 391-98).